The following is a 486-amino-acid chain: E3 ubiquitin-protein ligase TRIM50 (486 aa).

The RING-type zinc-finger motif lies at 16 to 57 (CPVCLEVFKEPLMLQCGHSYCKGCLLSLSRHLDSELRCPVCR). The segment at 84–125 (PEPQVCTHHRNPLSLFCEKDQELICGLCGLLGSHQHHRVTPV) adopts a B box-type zinc-finger fold. Zn(2+) contacts are provided by Cys89, His92, Cys111, and His117. Coiled coils occupy residues 125 to 170 (VSTV…ESDV) and 204 to 235 (LVAS…FGNE). The region spanning 275–474 (DIKLTVWKRL…LPMVLPLPSG (200 aa)) is the B30.2/SPRY domain. Position 372 is an N6-acetyllysine (Lys372).

It belongs to the TRIM/RBCC family. As to quaternary structure, can form dimers and trimers. Interacts with several E2 ubiquitin-conjugating enzymes, including UBE2L6, UBE2E1, UBE2E3. No interaction with UBE2H. Interacts with BECN1. Interacts with SQSTM1. Interacts with NLRP3. Auto-ubiquitinated. In terms of processing, acetylated by EP300 and KAT2B. HDAC6 drives TRIM50 deacetylation. Acetylation antagonizes with TRIM50 ubiquitination.

The protein resides in the cytoplasm. The catalysed reaction is S-ubiquitinyl-[E2 ubiquitin-conjugating enzyme]-L-cysteine + [acceptor protein]-L-lysine = [E2 ubiquitin-conjugating enzyme]-L-cysteine + N(6)-ubiquitinyl-[acceptor protein]-L-lysine.. In terms of biological role, E3 ubiquitin-protein ligase that ubiquitinates Beclin-1/BECN1 in a 'Lys-63'-dependent manner enhancing its binding to ULK1. In turn, promotes starvation-induced autophagy activation. Also interacts with p62/SQSTM1 protein and thereby induces the formation and the autophagy clearance of aggresome-associated polyubiquitinated proteins through HDAC6 interaction. Also promotes NLRP3 inflammasome activation by directly inducing NLRP3 oligomerization independent of its E3 ligase function. This is E3 ubiquitin-protein ligase TRIM50 (TRIM50) from Sus scrofa (Pig).